The sequence spans 239 residues: Orotidine 5'-phosphate decarboxylase (239 aa).

Residues Asp10, Lys32, 59–68 (DLKLHDIPNT), Thr122, Arg184, Gln193, Gly213, and Arg214 contribute to the substrate site. Lys61 serves as the catalytic Proton donor.

This sequence belongs to the OMP decarboxylase family. Type 1 subfamily. In terms of assembly, homodimer.

It catalyses the reaction orotidine 5'-phosphate + H(+) = UMP + CO2. It functions in the pathway pyrimidine metabolism; UMP biosynthesis via de novo pathway; UMP from orotate: step 2/2. Catalyzes the decarboxylation of orotidine 5'-monophosphate (OMP) to uridine 5'-monophosphate (UMP). This chain is Orotidine 5'-phosphate decarboxylase, found in Geobacillus sp. (strain WCH70).